A 93-amino-acid chain; its full sequence is Uteroglobin (93 aa).

Positions 1 to 17 are cleaved as a signal peptide; it reads MKLAITIILVMLSVCYS.

The protein belongs to the secretoglobin family. As to quaternary structure, antiparallel homodimer; disulfide-linked. Interaction with LMBR1L is controversial.

The protein resides in the secreted. Binds phosphatidylcholine, phosphatidylinositol, polychlorinated biphenyls (PCB) and weakly progesterone, potent inhibitor of phospholipase A2. In Neotomodon alstoni (Mexican volcano mouse), this protein is Uteroglobin (SCGB1A1).